The primary structure comprises 432 residues: D-amino acid dehydrogenase (432 aa).

3-17 (VLVLGSGVIGTASAY) serves as a coordination point for FAD.

The protein belongs to the DadA oxidoreductase family. FAD serves as cofactor.

The enzyme catalyses a D-alpha-amino acid + A + H2O = a 2-oxocarboxylate + AH2 + NH4(+). It participates in amino-acid degradation; D-alanine degradation; NH(3) and pyruvate from D-alanine: step 1/1. Functionally, oxidative deamination of D-amino acids. The protein is D-amino acid dehydrogenase of Ectopseudomonas mendocina (strain ymp) (Pseudomonas mendocina).